The sequence spans 1164 residues: FH1/FH2 domain-containing protein 1 (1164 aa).

The region spanning 53 to 458 is the GBD/FH3 domain; it reads AQIPAVHRLL…AAETEKQVAL (406 aa). Disordered regions lie at residues 340–411 and 470–500; these read DIEE…VGPP and MPNE…QSPA. Residues 355–368 show a composition bias toward basic and acidic residues; sequence KPSSEEGKRSRRSL. Position 367 is a phosphoserine (Ser367). A compositionally biased stretch (low complexity) spans 402–411; the sequence is GPASSPVGPP. Residue Ser486 is modified to Phosphoserine. The FH1 domain maps to 487 to 615; that stretch reads PETAPAARTP…LAAPLPHSVP (129 aa). Thr495 carries the post-translational modification Phosphothreonine. Phosphoserine occurs at positions 498, 523, and 573. The disordered stretch occupies residues 566–619; that stretch reads GKDIPAPSPPLPLLSGVPPPPPLPPPPPIKGPFPPPPPLPLAAPLPHSVPDSSA. A compositionally biased stretch (pro residues) spans 571-608; that stretch reads APSPPLPLLSGVPPPPPLPPPPPIKGPFPPPPPLPLAA. Residues 612–807 form an interaction with ROCK1 region; the sequence is HSVPDSSALP…AEPLFDLKVG (196 aa). Positions 616 to 1013 constitute an FH2 domain; the sequence is DSSALPTKRK…YRERNKTRGR (398 aa). A Phosphothreonine modification is found at Thr690. Positions 884–921 form a coiled coil; it reads LTRCAKVDFEQLTENLGQLERRSRAAEESLRSLAKHEL. Positions 1020–1143 are disordered; that stretch reads KFSGVAGEAP…NRKSLRRTLK (124 aa). The segment covering 1028–1041 has biased composition (low complexity); that stretch reads APSNPSVPVAVSSG. The DAD domain occupies 1053–1133; the sequence is MKSLLTSRPE…AARERKRSRG (81 aa). The span at 1073-1089 shows a compositional bias: polar residues; the sequence is MVQSSSPIMPTVGPSTA. Residues 1127–1142 are compositionally biased toward basic residues; it reads ERKRSRGNRKSLRRTL.

The protein belongs to the formin homology family. As to quaternary structure, self-associates via the FH2 domain. Binds to F-actin via its N-terminus. Binds to the cytoplasmic domain of CD21 via its C-terminus. Interacts with ROCK1 in a Src-dependent manner. Phosphorylated by ROCK1. In terms of tissue distribution, ubiquitous. Highly expressed in spleen.

Its subcellular location is the cytoplasm. The protein resides in the cytoskeleton. The protein localises to the cell projection. It localises to the bleb. Required for the assembly of F-actin structures, such as stress fibers. Depends on the Rho-ROCK cascade for its activity. Contributes to the coordination of microtubules with actin fibers and plays a role in cell elongation. Acts synergistically with ROCK1 to promote SRC-dependent non-apoptotic plasma membrane blebbing. This Homo sapiens (Human) protein is FH1/FH2 domain-containing protein 1 (FHOD1).